We begin with the raw amino-acid sequence, 437 residues long: Putrescine hydroxycinnamoyltransferase 3 (437 aa).

Residues H151 and D383 each act as proton acceptor in the active site.

It belongs to the plant acyltransferase family. Highly expressed in roots. Expressed at low levels in shoots and flowers.

Functionally, hydroxycinnamoyl transferase that catalyzes the transfer of an acyl from p-coumaryol-CoA to putrescine, to produce coumaroyl putrescine. Can use feruloyl-CoA and caffeoyl-CoA as acyl donors. The polypeptide is Putrescine hydroxycinnamoyltransferase 3 (Oryza sativa subsp. japonica (Rice)).